The chain runs to 321 residues: Cytochrome f (321 aa).

An N-terminal signal peptide occupies residues 1–38 (MKKNFYTISKTMSRSLKLILFSVFIGFSIFLIPQPTWA). Positions 39, 59, 62, and 63 each coordinate heme. The helical transmembrane segment at 288-308 (VIGMIIFFIGVGLSQIMLVLK) threads the bilayer.

Belongs to the cytochrome f family. As to quaternary structure, the 4 large subunits of the cytochrome b6-f complex are cytochrome b6, subunit IV (17 kDa polypeptide, PetD), cytochrome f and the Rieske protein, while the 4 small subunits are PetG, PetL, PetM and PetN. The complex functions as a dimer. Heme serves as cofactor.

The protein resides in the cellular thylakoid membrane. Component of the cytochrome b6-f complex, which mediates electron transfer between photosystem II (PSII) and photosystem I (PSI), cyclic electron flow around PSI, and state transitions. The chain is Cytochrome f from Prochlorococcus marinus (strain NATL2A).